The primary structure comprises 361 residues: 3-dehydroquinate synthase (361 aa).

Belongs to the archaeal-type DHQ synthase family.

The enzyme catalyses 2-amino-2,3,7-trideoxy-D-lyxo-hept-6-ulosonate + NAD(+) + H2O = 3-dehydroquinate + NH4(+) + NADH + H(+). Functionally, catalyzes the oxidative deamination and cyclization of 2-amino-3,7-dideoxy-D-threo-hept-6-ulosonic acid (ADH) to yield 3-dehydroquinate (DHQ), which is fed into the canonical shikimic pathway of aromatic amino acid biosynthesis. In Methanococcus maripaludis (strain C6 / ATCC BAA-1332), this protein is 3-dehydroquinate synthase.